The chain runs to 618 residues: Protease 4 (618 aa).

Over 1 to 24 the chain is Cytoplasmic; that stretch reads MRTLWRFIAGFFKWTWRLLNFVRE. The helical transmembrane segment at 25 to 45 threads the bilayer; sequence MVLNLFFIFLVLVGVGIWMQV. Topologically, residues 46 to 618 are periplasmic; that stretch reads SGGDSKETAS…AFCLTCANMR (573 aa). The active-site Proton donor/acceptor is Lys-209. Ser-409 acts as the Nucleophile in catalysis.

The protein belongs to the peptidase S49 family. Homotetramer.

Its subcellular location is the cell inner membrane. Its activity is regulated as follows. Inhibited by serine hydrolase inhibitor FP-biotin and by antipain. In terms of biological role, digests cleaved signal peptides in vitro, its in vivo function is unknown. This activity is necessary to maintain proper secretion of mature proteins across the membrane. The polypeptide is Protease 4 (sppA) (Escherichia coli (strain K12)).